The chain runs to 507 residues: ATP synthase subunit alpha, chloroplastic (507 aa).

Position 170–177 (170–177 (GDRQTGKT)) interacts with ATP.

It belongs to the ATPase alpha/beta chains family. As to quaternary structure, F-type ATPases have 2 components, CF(1) - the catalytic core - and CF(0) - the membrane proton channel. CF(1) has five subunits: alpha(3), beta(3), gamma(1), delta(1), epsilon(1). CF(0) has four main subunits: a, b, b' and c.

It localises to the plastid. The protein resides in the chloroplast thylakoid membrane. The catalysed reaction is ATP + H2O + 4 H(+)(in) = ADP + phosphate + 5 H(+)(out). Produces ATP from ADP in the presence of a proton gradient across the membrane. The alpha chain is a regulatory subunit. The sequence is that of ATP synthase subunit alpha, chloroplastic from Ipomoea purpurea (Common morning glory).